The following is a 270-amino-acid chain: Glutamate racemase (270 aa).

Substrate is bound by residues 7-8 (DS) and 39-40 (YG). The active-site Proton donor/acceptor is cysteine 70. Substrate is bound at residue 71–72 (NT). Catalysis depends on cysteine 194, which acts as the Proton donor/acceptor. Substrate is bound at residue 195–196 (TH).

It belongs to the aspartate/glutamate racemases family.

The enzyme catalyses L-glutamate = D-glutamate. The protein operates within cell wall biogenesis; peptidoglycan biosynthesis. Functionally, provides the (R)-glutamate required for cell wall biosynthesis. The protein is Glutamate racemase of Jannaschia sp. (strain CCS1).